Reading from the N-terminus, the 312-residue chain is Acetyl-coenzyme A carboxylase carboxyl transferase subunit alpha (312 aa).

In terms of domain architecture, CoA carboxyltransferase C-terminal spans 25 to 286 (GDDSAVEILK…GNYIIEKLNE (262 aa)).

This sequence belongs to the AccA family. As to quaternary structure, acetyl-CoA carboxylase is a heterohexamer composed of biotin carboxyl carrier protein (AccB), biotin carboxylase (AccC) and two subunits each of ACCase subunit alpha (AccA) and ACCase subunit beta (AccD).

It localises to the cytoplasm. The enzyme catalyses N(6)-carboxybiotinyl-L-lysyl-[protein] + acetyl-CoA = N(6)-biotinyl-L-lysyl-[protein] + malonyl-CoA. It functions in the pathway lipid metabolism; malonyl-CoA biosynthesis; malonyl-CoA from acetyl-CoA: step 1/1. Its function is as follows. Component of the acetyl coenzyme A carboxylase (ACC) complex. First, biotin carboxylase catalyzes the carboxylation of biotin on its carrier protein (BCCP) and then the CO(2) group is transferred by the carboxyltransferase to acetyl-CoA to form malonyl-CoA. The sequence is that of Acetyl-coenzyme A carboxylase carboxyl transferase subunit alpha from Campylobacter hominis (strain ATCC BAA-381 / DSM 21671 / CCUG 45161 / LMG 19568 / NCTC 13146 / CH001A).